The following is a 198-amino-acid chain: Putative undecaprenyl-diphosphatase YbjG (198 aa).

Over 1 to 27 (MLENLNLSLFSLINATPDSAPWMISLA) the chain is Cytoplasmic. The helical transmembrane segment at 28–48 (IFIAKDLITVVPLLAVVLWLW) threads the bilayer. At 49-57 (GLTAQRQLV) the chain is on the periplasmic side. The chain crosses the membrane as a helical span at residues 58 to 78 (IKIAIALAVSLFVSWTMGHLF). At 79-120 (PHDRPFVENIGYNFLHHAADDSFPSDHGTVIFTFALAFLCWH) the chain is on the cytoplasmic side. Residues 121 to 143 (RLWSGSLLMVLAVVIAWSRVYLG) form a helical membrane-spanning segment. At 144–149 (VHWPLD) the chain is on the periplasmic side. Residues 150–172 (MLGGLLAGMIGCLSAQIIWQAMG) form a helical membrane-spanning segment. Topologically, residues 173–198 (HKLYQRLQSWYRVCFALPIRKGWVRD) are cytoplasmic.

This sequence belongs to the BcrC/YbjG family.

The protein resides in the cell inner membrane. The catalysed reaction is di-trans,octa-cis-undecaprenyl diphosphate + H2O = di-trans,octa-cis-undecaprenyl phosphate + phosphate + H(+). In terms of biological role, overexpression leads to increased undecaprenyl diphosphatase activity and to increased resistance to bacitracin. May have a preferred substrate other than undecaprenyl diphosphate in vivo. The sequence is that of Putative undecaprenyl-diphosphatase YbjG (ybjG) from Escherichia coli (strain K12).